A 335-amino-acid polypeptide reads, in one-letter code: Protein-arginine kinase (335 aa).

In terms of domain architecture, Phosphagen kinase C-terminal spans 20-243 (IVMSSRIRLA…QQIINEEMQI (224 aa)). ATP contacts are provided by residues 23-27 (SSRIR), His81, Arg114, 165-169 (RASVM), and 196-201 (RGIYGE).

It belongs to the ATP:guanido phosphotransferase family.

The catalysed reaction is L-arginyl-[protein] + ATP = N(omega)-phospho-L-arginyl-[protein] + ADP + H(+). Functionally, catalyzes the specific phosphorylation of arginine residues in proteins. The sequence is that of Protein-arginine kinase from Staphylococcus haemolyticus (strain JCSC1435).